The primary structure comprises 773 residues: Mitochondrial 15S rRNA processing factor CCM1 (773 aa).

A mitochondrion-targeting transit peptide spans 1–23 (MLRARLLVPLVRPALVHRLDRCY). Basic and acidic residues predominate over residues 89 to 106 (AAEATEQHKELPPAEQER). Positions 89–122 (AAEATEQHKELPPAEQERPSGANTHTAPIKHDTK) are disordered. PPR repeat units follow at residues 220-254 (SAIT…NITP), 255-285 (TVHT…LKLA), 294-328 (NQVI…SLET), 331-365 (TAHT…SVAN), and 366-400 (VRTY…HSES).

The protein belongs to the CCM1 family. As to quaternary structure, binds to mitochondrial small subunit 15S rRNA.

It is found in the mitochondrion. In terms of biological role, regulates mitochondrial small subunit maturation by controlling 15S rRNA 5'-end processing. Localizes to the 5' precursor of the 15S rRNA in a position that is subsequently occupied by mS47 in the mature yeast mtSSU. Uses structure and sequence-specific RNA recognition, binding to a single-stranded region of the precursor and specifically recognizing bases -6 to -1. The exchange of Ccm1 for mS47 is coupled to the irreversible removal of precursor rRNA that is accompanied by conformational changes of the mitoribosomal proteins uS5m and mS26. These conformational changes signal completion of 5'-end rRNA processing through protection of the mature 5'-end of the 15S rRNA and stabilization of mS47. The removal of the 5' precursor together with the dissociation of Ccm1 may be catalyzed by the 5'-3' exoribonuclease Pet127. Involved in the specific removal of group I introns in mitochondrial encoded transcripts. This is Mitochondrial 15S rRNA processing factor CCM1 (CCM1) from Yarrowia lipolytica (strain CLIB 122 / E 150) (Yeast).